We begin with the raw amino-acid sequence, 376 residues long: MARDYYEILGVARDADKEEIKQAYRRLARKYHPDVNKEPGAEERFKEINRAYEVLSEPETRARYDRFGPEGVSGAGVGFQDMSDMGGFADIFESIFSGFAGGGMGGPTQQRRRGGPARGDDLRLDLKLDFREAVFGGEKEIRISHLETCETCSGSGAKPGTRPRTCSTCSGSGQVRRVTRTPFGSFTQVSTCPTCNGTGMVIEDKCDACDGKGTNQVTKKLKITIPAGVDNGTRLRIQQEGDAGQRGGPPGDLYVYLFVNEDEEFQRDGINVISEIKVSYLQAILGCRLEVNTVDGPVELIIPAGTQPNTVMKLENRGVPRLGNPVSRGDHLLTVLIDIPTKVIPEERELLEKLAKIKGDRTGKGGLEGFLGNLFK.

The 65-residue stretch at 4 to 68 (DYYEILGVAR…ETRARYDRFG (65 aa)) folds into the J domain. Residues 102 to 121 (GGMGGPTQQRRRGGPARGDD) form a disordered region. A CR-type zinc finger spans residues 136–218 (GGEKEIRISH…CDGKGTNQVT (83 aa)). The Zn(2+) site is built by Cys149, Cys152, Cys166, Cys169, Cys192, Cys195, Cys206, and Cys209. 4 CXXCXGXG motif repeats span residues 149–156 (CETCSGSG), 166–173 (CSTCSGSG), 192–199 (CPTCNGTG), and 206–213 (CDACDGKG).

This sequence belongs to the DnaJ family. In terms of assembly, homodimer. It depends on Zn(2+) as a cofactor.

Its subcellular location is the cytoplasm. Functionally, participates actively in the response to hyperosmotic and heat shock by preventing the aggregation of stress-denatured proteins and by disaggregating proteins, also in an autonomous, DnaK-independent fashion. Unfolded proteins bind initially to DnaJ; upon interaction with the DnaJ-bound protein, DnaK hydrolyzes its bound ATP, resulting in the formation of a stable complex. GrpE releases ADP from DnaK; ATP binding to DnaK triggers the release of the substrate protein, thus completing the reaction cycle. Several rounds of ATP-dependent interactions between DnaJ, DnaK and GrpE are required for fully efficient folding. Also involved, together with DnaK and GrpE, in the DNA replication of plasmids through activation of initiation proteins. The polypeptide is Chaperone protein DnaJ (Trichormus variabilis (strain ATCC 29413 / PCC 7937) (Anabaena variabilis)).